Consider the following 663-residue polypeptide: Alpha-amylase MalA (663 aa).

Disordered regions lie at residues 1-28 and 80-135; these read MHHP…PTAT and GTLE…LTLR. Positions 92-111 are enriched in gly residues; the sequence is RSGGHSGGVSGGRSGPGRSG. D411 (nucleophile) is an active-site residue. The Proton donor role is filled by E440.

It belongs to the glycosyl hydrolase 13 family.

The protein localises to the cytoplasm. The enzyme catalyses Endohydrolysis of (1-&gt;4)-alpha-D-glucosidic linkages in polysaccharides containing three or more (1-&gt;4)-alpha-linked D-glucose units.. The protein operates within glycan degradation; starch degradation. Its activity is regulated as follows. Stable and active over a broad range of NaCl concentrations (0.5 to 4.2 M NaCl), with maximal activity at 2.6 M NaCl. 83% and 94% of the maximum activity at 0.6 and 4.2 M NaCl, respectively. Active and stable also in KCl. Alpha-amylase that cleaves starch into oligosaccharides, the first step in starch degradation. Endo-acting enzyme which prefers a linear polysaccharide to branched polysaccharides hydrolyzing alpha-1,4 glucosidic bonds efficiently. Also has transglycosylation activity, but does not act on alpha-1,6 bonds. Higher activities of 100%, 79% and 67.8% against amylose, soluble starch and amylopectin, respectively. Lower activity of 22% against glycogen and faint or no activity against alpha-, beta- and gamma-cyclodextrin. This chain is Alpha-amylase MalA, found in Haloarcula japonica (strain ATCC 49778 / DSM 6131 / JCM 7785 / NBRC 101032 / NCIMB 13157 / TR-1).